We begin with the raw amino-acid sequence, 147 residues long: Siroheme decarboxylase NirG subunit (147 aa).

This sequence belongs to the Ahb/Nir family. In terms of assembly, probably forms a complex composed of NirD, NirL, NirG and NirH. All proteins are required for the total conversion of siroheme to didecarboxysiroheme.

The catalysed reaction is siroheme + 2 H(+) = 12,18-didecarboxysiroheme + 2 CO2. It participates in porphyrin-containing compound metabolism. In terms of biological role, involved in heme d1 biosynthesis. Catalyzes the decarboxylation of siroheme into didecarboxysiroheme. The polypeptide is Siroheme decarboxylase NirG subunit (Stutzerimonas stutzeri (Pseudomonas stutzeri)).